Consider the following 153-residue polypeptide: UPF0756 membrane protein LCA_1031 (153 aa).

The next 4 helical transmembrane spans lie at 4 to 24, 52 to 72, 85 to 105, and 115 to 135; these read WLFL…SLII, WGVT…QIGF, FIAV…VGLL, and LVFG…GPVI.

Belongs to the UPF0756 family.

The protein resides in the cell membrane. The protein is UPF0756 membrane protein LCA_1031 of Latilactobacillus sakei subsp. sakei (strain 23K) (Lactobacillus sakei subsp. sakei).